The chain runs to 204 residues: Holliday junction branch migration complex subunit RuvA (204 aa).

Residues methionine 1–alanine 64 are domain I. The tract at residues threonine 65–serine 143 is domain II. Positions valine 144–alanine 154 are flexible linker. The segment at alanine 154–threonine 204 is domain III.

The protein belongs to the RuvA family. Homotetramer. Forms an RuvA(8)-RuvB(12)-Holliday junction (HJ) complex. HJ DNA is sandwiched between 2 RuvA tetramers; dsDNA enters through RuvA and exits via RuvB. An RuvB hexamer assembles on each DNA strand where it exits the tetramer. Each RuvB hexamer is contacted by two RuvA subunits (via domain III) on 2 adjacent RuvB subunits; this complex drives branch migration. In the full resolvosome a probable DNA-RuvA(4)-RuvB(12)-RuvC(2) complex forms which resolves the HJ.

Its subcellular location is the cytoplasm. The RuvA-RuvB-RuvC complex processes Holliday junction (HJ) DNA during genetic recombination and DNA repair, while the RuvA-RuvB complex plays an important role in the rescue of blocked DNA replication forks via replication fork reversal (RFR). RuvA specifically binds to HJ cruciform DNA, conferring on it an open structure. The RuvB hexamer acts as an ATP-dependent pump, pulling dsDNA into and through the RuvAB complex. HJ branch migration allows RuvC to scan DNA until it finds its consensus sequence, where it cleaves and resolves the cruciform DNA. This chain is Holliday junction branch migration complex subunit RuvA, found in Bartonella tribocorum (strain CIP 105476 / IBS 506).